The following is a 255-amino-acid chain: Ribosomal RNA small subunit methyltransferase A (255 aa).

S-adenosyl-L-methionine-binding residues include asparagine 12, leucine 14, glycine 39, glutamate 60, aspartate 84, and asparagine 106.

This sequence belongs to the class I-like SAM-binding methyltransferase superfamily. rRNA adenine N(6)-methyltransferase family. RsmA subfamily.

It localises to the cytoplasm. It catalyses the reaction adenosine(1518)/adenosine(1519) in 16S rRNA + 4 S-adenosyl-L-methionine = N(6)-dimethyladenosine(1518)/N(6)-dimethyladenosine(1519) in 16S rRNA + 4 S-adenosyl-L-homocysteine + 4 H(+). Functionally, specifically dimethylates two adjacent adenosines (A1518 and A1519) in the loop of a conserved hairpin near the 3'-end of 16S rRNA in the 30S particle. May play a critical role in biogenesis of 30S subunits. The polypeptide is Ribosomal RNA small subunit methyltransferase A (Herminiimonas arsenicoxydans).